Here is a 416-residue protein sequence, read N- to C-terminus: Tryptophan synthase beta chain (416 aa).

Lys98 is modified (N6-(pyridoxal phosphate)lysine).

The protein belongs to the TrpB family. Tetramer of two alpha and two beta chains. It depends on pyridoxal 5'-phosphate as a cofactor.

The catalysed reaction is (1S,2R)-1-C-(indol-3-yl)glycerol 3-phosphate + L-serine = D-glyceraldehyde 3-phosphate + L-tryptophan + H2O. The protein operates within amino-acid biosynthesis; L-tryptophan biosynthesis; L-tryptophan from chorismate: step 5/5. Functionally, the beta subunit is responsible for the synthesis of L-tryptophan from indole and L-serine. The polypeptide is Tryptophan synthase beta chain (Ruegeria pomeroyi (strain ATCC 700808 / DSM 15171 / DSS-3) (Silicibacter pomeroyi)).